The primary structure comprises 278 residues: Octanoyltransferase LipM (278 aa).

In terms of domain architecture, BPL/LPL catalytic spans 33–248; that stretch reads KKMPPTIRFY…GFEKGLDVEL (216 aa). C150 functions as the Acyl-thioester intermediate in the catalytic mechanism.

It belongs to the octanoyltransferase LipM family. In terms of assembly, monomer.

It carries out the reaction octanoyl-[ACP] + L-lysyl-[protein] = N(6)-octanoyl-L-lysyl-[protein] + holo-[ACP] + H(+). It functions in the pathway protein modification; protein lipoylation via endogenous pathway; protein N(6)-(lipoyl)lysine from octanoyl-[acyl-carrier-protein]. In terms of biological role, catalyzes the transfer of endogenously produced octanoic acid from octanoyl-acyl-carrier-protein onto the lipoyl domain of GcvH, an intermediate carrier during protein lipoylation. This is Octanoyltransferase LipM from Bacillus anthracis.